A 328-amino-acid chain; its full sequence is Beta-ketoacyl-[acyl-carrier-protein] synthase III (328 aa).

Active-site residues include Cys114 and His253. The tract at residues 254–258 (QANIR) is ACP-binding. Residue Asn283 is part of the active site.

It belongs to the thiolase-like superfamily. FabH family. In terms of assembly, homodimer.

The protein resides in the cytoplasm. It carries out the reaction malonyl-[ACP] + acetyl-CoA + H(+) = 3-oxobutanoyl-[ACP] + CO2 + CoA. It functions in the pathway lipid metabolism; fatty acid biosynthesis. Functionally, catalyzes the condensation reaction of fatty acid synthesis by the addition to an acyl acceptor of two carbons from malonyl-ACP. Catalyzes the first condensation reaction which initiates fatty acid synthesis and may therefore play a role in governing the total rate of fatty acid production. Possesses both acetoacetyl-ACP synthase and acetyl transacylase activities. Its substrate specificity determines the biosynthesis of branched-chain and/or straight-chain of fatty acids. This is Beta-ketoacyl-[acyl-carrier-protein] synthase III from Clostridioides difficile (strain 630) (Peptoclostridium difficile).